The following is a 667-amino-acid chain: MSAPLIDKYRKMATFDWKKLKAAVEGEEHVRLKSEVVAKMKSEPVFHRDYRVLSREEQREVVHQRWKKIVEWGLFKDPYSDLENFHALTETLEAYDQGTSARLFLHGNVFGAAVKSMGTDRHKDLIQKTENNEIVGAFCLTEVGHGSNTAEIQTTATFDNGELVFNTPSVSAIKCWAGNLAHSATHVVVYAQLHVEGKNEGFHGFVIQVRCPRTFQTLPGITIGDMGSKPGCWQGVENGWMEFKNHRAPLSALLNKGCDITPDGKYVTSFKSASEKQSVSLGTLSVGRLGIIAKGMMACTFASTIAIRYSVARRQFGPVKGAENEIPVLEYPLQQYRLFPYLSAAICIRIFQKKFVGHFTEYMMRVIMGEKSDELSEFSKEVHALSSGAKPVATWLGVESLGEARKACGGHGYLQMSRLNTLRDDNDPSQTFEGENFMILQQTSNILLGKAQSIGSIETPMSTMSFLNQKPSKFSSWSSNPVNDVLSAYRYLTYHLLQTTSAEAYRLKASGKNSFEVRNEIQIHRAVNLSVAYTEHTMIHWVQQFLKEIEDQSVKPVLQKVLNLFSLFLLERHLATLYITGYASGGKFGEDLREKLRLAVAELKPEAIALVDSIAPDDFILHSALGASDGKAYEHIMEEFRKYTNEQPRWVCDLAQFLQKRSQGSKL.

FAD contacts are provided by residues 138-141 (FCLT), 146-147 (GS), G178, R313, 334-337 (QQYR), and G410. E433 (proton acceptor) is an active-site residue. Residue E435 coordinates FAD. A Microbody targeting signal motif is present at residues 665–667 (SKL).

Belongs to the acyl-CoA oxidase family. As to quaternary structure, homodimer. FAD serves as cofactor. As to expression, expressed in intestine.

It is found in the peroxisome. It catalyses the reaction IC-asc-C7-CoA + O2 = IC-asc-DeltaC7-CoA + H2O2. It carries out the reaction IC-asc-C9-CoA + O2 = IC-asc-DeltaC9-CoA + H2O2. The enzyme catalyses asc-C13-CoA + O2 = asc-DeltaC13-CoA + H2O2. It functions in the pathway lipid metabolism; peroxisomal fatty acid beta-oxidation. With respect to regulation, in contrast to other acyl-coenzyme A oxidases which bind to and are activated by ATP, does not bind ATP. Its function is as follows. Involved in the first step of peroxisomal beta-oxidation by catalyzing the desaturation of fatty acid-derived side chains of ascaroside pheromones, which regulates development and behavior. Specifically, shortens indol-3-carbonyl(IC)-ascarosides with 7-carbon (IC-asc-C7) or 9-carbon (IC-asc-C9) side chains and contributes to the shortening of ascarosides with 13-carbon (asc-C13) and 15-carbon (asc-C15) side chains. This Caenorhabditis elegans protein is Acyl-coenzyme A oxidase acox-3.